Consider the following 327-residue polypeptide: Zinc transport protein ZntB (327 aa).

The Cytoplasmic segment spans residues 1 to 271 (MDVVAGKALQ…AMNRRTYTMS (271 aa)). A helical transmembrane segment spans residues 272–292 (LLAMVFLPTTFLTGLFGVNLG). At 293-300 (GIPGNTDS) the chain is on the periplasmic side. A helical transmembrane segment spans residues 301 to 321 (FGFATFCMMLVVLVLGVAWWL). Over 322-327 (KHSKWL) the chain is Cytoplasmic.

This sequence belongs to the CorA metal ion transporter (MIT) (TC 1.A.35) family.

Its subcellular location is the cell inner membrane. It carries out the reaction Zn(2+)(out) + H(+)(out) = Zn(2+)(in) + H(+)(in). In terms of biological role, zinc transporter. Acts as a Zn(2+):proton symporter, which likely mediates zinc ion uptake. The chain is Zinc transport protein ZntB from Yersinia enterocolitica serotype O:8 / biotype 1B (strain NCTC 13174 / 8081).